A 591-amino-acid chain; its full sequence is Aspartate--tRNA(Asp/Asn) ligase (591 aa).

E175 contributes to the L-aspartate binding site. The tract at residues 199-202 (QQFK) is aspartate. Residues R221 and H453 each coordinate L-aspartate. 221-223 (RDE) contacts ATP. E486 contacts ATP. R493 contacts L-aspartate. 538–541 (GIDR) contributes to the ATP binding site.

This sequence belongs to the class-II aminoacyl-tRNA synthetase family. Type 1 subfamily. Homodimer.

It is found in the cytoplasm. The catalysed reaction is tRNA(Asx) + L-aspartate + ATP = L-aspartyl-tRNA(Asx) + AMP + diphosphate. Its function is as follows. Aspartyl-tRNA synthetase with relaxed tRNA specificity since it is able to aspartylate not only its cognate tRNA(Asp) but also tRNA(Asn). Reaction proceeds in two steps: L-aspartate is first activated by ATP to form Asp-AMP and then transferred to the acceptor end of tRNA(Asp/Asn). In Cereibacter sphaeroides (strain KD131 / KCTC 12085) (Rhodobacter sphaeroides), this protein is Aspartate--tRNA(Asp/Asn) ligase.